The sequence spans 320 residues: o-succinylbenzoate synthase (320 aa).

Lys133 acts as the Proton donor in catalysis. Mg(2+) is bound by residues Asp161, Glu190, and Asp213. Lys235 functions as the Proton acceptor in the catalytic mechanism.

This sequence belongs to the mandelate racemase/muconate lactonizing enzyme family. MenC type 1 subfamily. The cofactor is a divalent metal cation.

The enzyme catalyses (1R,6R)-6-hydroxy-2-succinyl-cyclohexa-2,4-diene-1-carboxylate = 2-succinylbenzoate + H2O. It functions in the pathway quinol/quinone metabolism; 1,4-dihydroxy-2-naphthoate biosynthesis; 1,4-dihydroxy-2-naphthoate from chorismate: step 4/7. Its pathway is quinol/quinone metabolism; menaquinone biosynthesis. In terms of biological role, converts 2-succinyl-6-hydroxy-2,4-cyclohexadiene-1-carboxylate (SHCHC) to 2-succinylbenzoate (OSB). The sequence is that of o-succinylbenzoate synthase from Escherichia coli O6:H1 (strain CFT073 / ATCC 700928 / UPEC).